The chain runs to 192 residues: Leucine-rich repeat-containing protein 51 (192 aa).

3 LRR repeats span residues S49 to A71, N80 to F101, and N103 to A124. An LRRCT domain is found at N137 to W175.

The protein resides in the cytoplasm. The polypeptide is Leucine-rich repeat-containing protein 51 (Macaca mulatta (Rhesus macaque)).